We begin with the raw amino-acid sequence, 213 residues long: Inactive ribonuclease-like protein 10 (213 aa).

An N-terminal signal peptide occupies residues 1–24 (MKLTLVQFFFMMLLLLLGLGVGLG). N-linked (GlcNAc...) asparagine glycosylation is present at Asn128.

It belongs to the pancreatic ribonuclease family. The N-terminus is blocked. Glycosylated. As to expression, male-specific expression in proximal caput of the epididymis.

Its subcellular location is the secreted. Secreted proximal epididymal protein required for post-testicular sperm maturation and male fertility. May be involved in sperm adhesion to the egg zona pellucida. Does not have ribonuclease activity. This Sus scrofa (Pig) protein is Inactive ribonuclease-like protein 10 (RNASE10).